We begin with the raw amino-acid sequence, 219 residues long: Ribose-5-phosphate isomerase A (219 aa).

Residues 28-31 (TGST), 81-84 (DGAD), and 94-97 (KGGG) contribute to the substrate site. Catalysis depends on glutamate 103, which acts as the Proton acceptor. Substrate is bound at residue lysine 121.

The protein belongs to the ribose 5-phosphate isomerase family. Homodimer.

It catalyses the reaction aldehydo-D-ribose 5-phosphate = D-ribulose 5-phosphate. It functions in the pathway carbohydrate degradation; pentose phosphate pathway; D-ribose 5-phosphate from D-ribulose 5-phosphate (non-oxidative stage): step 1/1. Functionally, catalyzes the reversible conversion of ribose-5-phosphate to ribulose 5-phosphate. The sequence is that of Ribose-5-phosphate isomerase A from Enterobacter cloacae.